The sequence spans 131 residues: Small ribosomal subunit protein uS8 (131 aa).

The protein belongs to the universal ribosomal protein uS8 family. Part of the 30S ribosomal subunit. Contacts proteins S5 and S12.

Functionally, one of the primary rRNA binding proteins, it binds directly to 16S rRNA central domain where it helps coordinate assembly of the platform of the 30S subunit. The polypeptide is Small ribosomal subunit protein uS8 (Ruminiclostridium cellulolyticum (strain ATCC 35319 / DSM 5812 / JCM 6584 / H10) (Clostridium cellulolyticum)).